Here is a 187-residue protein sequence, read N- to C-terminus: Orotate phosphoribosyltransferase (187 aa).

Residues R98, K99, K102, H104, and 128–136 each bind 5-phospho-alpha-D-ribose 1-diphosphate; that span reads EDVTTTGGS. Orotate is bound by residues T132 and R160.

Belongs to the purine/pyrimidine phosphoribosyltransferase family. PyrE subfamily. As to quaternary structure, homodimer. The cofactor is Mg(2+).

It carries out the reaction orotidine 5'-phosphate + diphosphate = orotate + 5-phospho-alpha-D-ribose 1-diphosphate. The protein operates within pyrimidine metabolism; UMP biosynthesis via de novo pathway; UMP from orotate: step 1/2. Functionally, catalyzes the transfer of a ribosyl phosphate group from 5-phosphoribose 1-diphosphate to orotate, leading to the formation of orotidine monophosphate (OMP). The protein is Orotate phosphoribosyltransferase of Bradyrhizobium diazoefficiens (strain JCM 10833 / BCRC 13528 / IAM 13628 / NBRC 14792 / USDA 110).